We begin with the raw amino-acid sequence, 418 residues long: Serine/threonine-protein kinase Sgk1 (418 aa).

Residues 50 to 78 (PQEPELLNENSSPPPSPSQQINLGPSSNP) are disordered. Over residues 68-78 (QQINLGPSSNP) the composition is skewed to polar residues. The Protein kinase domain maps to 85–342 (FQFLKIIGKG…FMEIKNHMFF (258 aa)). ATP is bound by residues 91–99 (IGKGSFGKV) and Lys114. Catalysis depends on Asp209, which acts as the Proton acceptor. In terms of domain architecture, AGC-kinase C-terminal spans 343 to 418 (SPINWDDLIN…SYAPPMESYL (76 aa)).

The protein belongs to the protein kinase superfamily. AGC Ser/Thr protein kinase family.

Its subcellular location is the cytoplasm. The protein resides in the nucleus. The protein localises to the endoplasmic reticulum. It catalyses the reaction L-seryl-[protein] + ATP = O-phospho-L-seryl-[protein] + ADP + H(+). The enzyme catalyses L-threonyl-[protein] + ATP = O-phospho-L-threonyl-[protein] + ADP + H(+). In terms of biological role, protein kinase that may play an important role in cellular stress response. Plays an important role in activating certain potassium, sodium, and chloride channels, suggesting an involvement in the regulation of processes such as cell survival, neuronal excitability, and renal sodium excretion. This Xenopus tropicalis (Western clawed frog) protein is Serine/threonine-protein kinase Sgk1 (sgk1).